Consider the following 60-residue polypeptide: uncharacterized protein (60 aa).

Residues 14-34 (MLFLGTIGLAVVVGGLMAYGY) traverse the membrane as a helical segment. A disordered region spans residues 38–60 (GKTPSSGTSFHTASPSFSSRYRY). Residues 40–60 (TPSSGTSFHTASPSFSSRYRY) show a composition bias toward polar residues.

The protein resides in the host membrane. This is an uncharacterized protein from Dryophytes versicolor (chameleon treefrog).